The sequence spans 463 residues: Immune-associated nucleotide-binding protein 10 (463 aa).

The region spanning 3–211 is the AIG1-type G domain; sequence EPIKNIVLVG…YTYQLHRKIK (209 aa). Positions 12-19 are G1; that stretch reads GRTGNGKS. Residues 12-20 and Ser-33 each bind GTP; that span reads GRTGNGKSS. The segment at 39 to 43 is G2; the sequence is GVTMI. The G3 stretch occupies residues 61–64; it reads DTPG. The G4 stretch occupies residues 131–134; sequence TGGD. The segment at 170–172 is G5; that stretch reads DNK. GTP is bound at residue Asn-171. Residues 173–308 adopt a coiled-coil conformation; sequence SKDEKKKVEQ…KQLIAQANRM (136 aa).

Belongs to the TRAFAC class TrmE-Era-EngA-EngB-Septin-like GTPase superfamily. AIG1/Toc34/Toc159-like paraseptin GTPase family. IAN subfamily. As to expression, expressed in radicles of the germinating seeds.

The sequence is that of Immune-associated nucleotide-binding protein 10 from Arabidopsis thaliana (Mouse-ear cress).